A 241-amino-acid chain; its full sequence is Probable transcriptional regulatory protein AZOSEA20720 (241 aa).

The tract at residues methionine 1–arginine 21 is disordered.

This sequence belongs to the TACO1 family.

Its subcellular location is the cytoplasm. The polypeptide is Probable transcriptional regulatory protein AZOSEA20720 (Aromatoleum aromaticum (strain DSM 19018 / LMG 30748 / EbN1) (Azoarcus sp. (strain EbN1))).